Here is a 117-residue protein sequence, read N- to C-terminus: Large ribosomal subunit protein bL20 (117 aa).

This sequence belongs to the bacterial ribosomal protein bL20 family.

Its function is as follows. Binds directly to 23S ribosomal RNA and is necessary for the in vitro assembly process of the 50S ribosomal subunit. It is not involved in the protein synthesizing functions of that subunit. The chain is Large ribosomal subunit protein bL20 from Citrifermentans bemidjiense (strain ATCC BAA-1014 / DSM 16622 / JCM 12645 / Bem) (Geobacter bemidjiensis).